Consider the following 620-residue polypeptide: UDP-glucose:protein N-beta-glucosyltransferase (620 aa).

The protein belongs to the glycosyltransferase 41 family. Requires Does not require a metal cofactor. as cofactor.

The protein localises to the cytoplasm. It catalyses the reaction L-asparaginyl-[protein] + UDP-alpha-D-glucose = N(4)-(beta-D-glucosyl)-L-asparaginyl-[protein] + UDP + H(+). Its pathway is protein modification; protein glycosylation. Functionally, inverting glycosyltransferase that catalyzes the transfer of one glucose moiety from UDP-glucose to an asparagine residue in peptides and proteins containing the NX(S/T) motif, resulting in their modification with a beta-linked 1,N-glucose. Likely acts as a key component of a general protein glycosylation system. Also accepts UDP-galactose as a substrate donor, albeit with low efficiency. Cannot use UDP-GlcNAc or UDP-GalNAc as substrate donor. This is UDP-glucose:protein N-beta-glucosyltransferase from Actinobacillus pleuropneumoniae serotype 7 (strain AP76).